We begin with the raw amino-acid sequence, 549 residues long: Glucose-6-phosphate isomerase (549 aa).

An N6-acetyllysine mark is found at K80, K228, and K234. The active-site Proton donor is E355. Catalysis depends on residues H386 and K514.

Belongs to the GPI family.

The protein localises to the cytoplasm. It carries out the reaction alpha-D-glucose 6-phosphate = beta-D-fructose 6-phosphate. It participates in carbohydrate biosynthesis; gluconeogenesis. Its pathway is carbohydrate degradation; glycolysis; D-glyceraldehyde 3-phosphate and glycerone phosphate from D-glucose: step 2/4. Its function is as follows. Catalyzes the reversible isomerization of glucose-6-phosphate to fructose-6-phosphate. This Escherichia coli O139:H28 (strain E24377A / ETEC) protein is Glucose-6-phosphate isomerase.